The chain runs to 263 residues: 4-hydroxy-2-oxo-heptane-1,7-dioate aldolase (263 aa).

The Proton acceptor role is filled by His-45. Gln-147 is a substrate binding site. An a divalent metal cation-binding site is contributed by Glu-149. Positions 174 and 175 each coordinate substrate. A divalent metal cation is bound at residue Asp-175.

The protein belongs to the HpcH/HpaI aldolase family. Homohexamer; trimer of dimers. Requires a divalent metal cation as cofactor.

It carries out the reaction 4-hydroxy-2-oxoheptanedioate = succinate semialdehyde + pyruvate. Its pathway is aromatic compound metabolism; 4-hydroxyphenylacetate degradation; pyruvate and succinate semialdehyde from 4-hydroxyphenylacetate: step 7/7. Functionally, catalyzes the reversible retro-aldol cleavage of 4-hydroxy-2-ketoheptane-1,7-dioate (HKHD) to pyruvate and succinic semialdehyde. In Salmonella enteritidis PT4 (strain P125109), this protein is 4-hydroxy-2-oxo-heptane-1,7-dioate aldolase.